We begin with the raw amino-acid sequence, 1914 residues long: Diacylglycerol kinase eta (1914 aa).

The span at 1 to 10 (MSHLKLDTLH) shows a compositional bias: basic and acidic residues. Residues 1–37 (MSHLKLDTLHVQRSPRGSRRSSRSSGRSSACSSGSIS) are disordered. The segment covering 23–37 (RSSGRSSACSSGSIS) has biased composition (low complexity). The PH domain occupies 82–175 (AIIKEGFLLK…WLGSLKTATA (94 aa)). Phorbol-ester/DAG-type zinc fingers lie at residues 195–245 (HHHW…IANC) and 268–319 (PHQW…AVAC). The DAGKc domain maps to 350-486 (GNFSPLLVFV…DRWSIMVFEK (137 aa)). Disordered stretches follow at residues 621-642 (EKDQINSKERRNSRSLRSSEKE), 783-805 (GANIDDAGNRLSPCSDGGENTPT), 1016-1053 (TLCSEHVGPPKPPRKKSLSALSRTQAHPRRRNSSPPRI), 1116-1135 (QHRGGDNDSEYPEHQQTPTN), and 1175-1216 (PNTI…TVSL). The span at 1175 to 1187 (PNTILTTSTSPTK) shows a compositional bias: polar residues. The SAM domain occupies 1851-1914 (WSVNEVVTWL…LQAIKDLSEN (64 aa)).

This sequence belongs to the eukaryotic diacylglycerol kinase family.

It is found in the cytoplasm. The enzyme catalyses a 1,2-diacyl-sn-glycerol + ATP = a 1,2-diacyl-sn-glycero-3-phosphate + ADP + H(+). Its function is as follows. Phosphorylates diacylglycerol (DAG) to generate phosphatidic acid (PA). The sequence is that of Diacylglycerol kinase eta from Drosophila sechellia (Fruit fly).